Reading from the N-terminus, the 110-residue chain is UPF0367 protein Syncc9605_2376 (110 aa).

The protein belongs to the UPF0367 family.

The chain is UPF0367 protein Syncc9605_2376 from Synechococcus sp. (strain CC9605).